A 267-amino-acid chain; its full sequence is MPRKLRDLPEEGEIVMATVERVEDHGAFVTLDEYPGVDGYIHISEVASGWVKNIRDYVKEGQKVVAKVIRVNPKRKYANLSLRKVTDHQRKEKLKEWKREQRAEKLLEMAAEELGKDLDEAYEEAGYKLIEEYGSLYDALERAAAEEGPEPLLKAGVPEEWAEKLAELAIENIEPGRVKIEAYVDLTCPAPNGVEIIREALEKIEEFQQGDVKMEVQYVGAPRYRITVDAPDYRTAEKMVRKAAQAAIDHVEEHGGEGEFHREIEEG.

Positions 12–83 constitute an S1 motif domain; that stretch reads GEIVMATVER…KRKYANLSLR (72 aa).

This sequence belongs to the eIF-2-alpha family. As to quaternary structure, heterotrimer composed of an alpha, a beta and a gamma chain.

Functionally, eIF-2 functions in the early steps of protein synthesis by forming a ternary complex with GTP and initiator tRNA. The polypeptide is Translation initiation factor 2 subunit alpha (Methanopyrus kandleri (strain AV19 / DSM 6324 / JCM 9639 / NBRC 100938)).